The sequence spans 352 residues: Putative histone-lysine N-methyltransferase ASHH4 (352 aa).

The 50-residue stretch at 60-109 folds into the AWS domain; that stretch reads DHGIFCSCSLDPGSSTLCGSDCNCGILLSSCSSSCKCSSECTNKPFQQRH. The region spanning 111–228 is the SET domain; that stretch reads KKMKLVQTEK…KGEQLTYDYQ (118 aa). Positions 234–250 constitute a Post-SET domain; it reads ADQDCYCGAVCCRKKLG.

The protein belongs to the class V-like SAM-binding methyltransferase superfamily. Histone-lysine methyltransferase family. SET2 subfamily.

The protein localises to the nucleus. Its subcellular location is the chromosome. The protein resides in the centromere. The catalysed reaction is L-lysyl-[histone] + S-adenosyl-L-methionine = N(6)-methyl-L-lysyl-[histone] + S-adenosyl-L-homocysteine + H(+). In terms of biological role, histone methyltransferase. This Arabidopsis thaliana (Mouse-ear cress) protein is Putative histone-lysine N-methyltransferase ASHH4 (ASHH4).